Reading from the N-terminus, the 212-residue chain is Regulatory protein RecX (212 aa).

Belongs to the RecX family.

It localises to the cytoplasm. In terms of biological role, modulates RecA activity. The protein is Regulatory protein RecX of Clostridioides difficile (strain 630) (Peptoclostridium difficile).